We begin with the raw amino-acid sequence, 246 residues long: tRNA1(Val) (adenine(37)-N6)-methyltransferase (246 aa).

This sequence belongs to the methyltransferase superfamily. tRNA (adenine-N(6)-)-methyltransferase family.

The protein resides in the cytoplasm. The catalysed reaction is adenosine(37) in tRNA1(Val) + S-adenosyl-L-methionine = N(6)-methyladenosine(37) in tRNA1(Val) + S-adenosyl-L-homocysteine + H(+). Its function is as follows. Specifically methylates the adenine in position 37 of tRNA(1)(Val) (anticodon cmo5UAC). The sequence is that of tRNA1(Val) (adenine(37)-N6)-methyltransferase from Shewanella halifaxensis (strain HAW-EB4).